The chain runs to 938 residues: Glutamate receptor ionotropic, NMDA 1 (938 aa).

An N-terminal signal peptide occupies residues 1 to 18 (MSTMHLLTFALLFSCSFA). The Extracellular segment spans residues 19–559 (RAACDPKIVN…TLDSFMQPFQ (541 aa)). 10 N-linked (GlcNAc...) asparagine glycosylation sites follow: N61, N203, N239, N276, N300, N350, N368, N440, N471, and N491. C79 and C308 are disulfide-bonded. Intrachain disulfides connect C420–C454 and C436–C455. The glycine site is built by P516, T518, and R523. The helical transmembrane segment at 560–580 (STLWLLVGLSVHVVAVMLYLL) threads the bilayer. The Cytoplasmic portion of the chain corresponds to 581 to 602 (DRFSPFGRFKVNSEEEEEDALT). An intramembrane region (discontinuously helical) is located at residues 603–624 (LSSAMWFSWGVLLNSGIGEGAP). The segment at 603-624 (LSSAMWFSWGVLLNSGIGEGAP) is pore-forming. Over 625-630 (RSFSAR) the chain is Cytoplasmic. A helical membrane pass occupies residues 631–647 (ILGMVWAGFAMIIVASY). Residues 648-812 (TANLAAFLVL…NAPATLTFEN (165 aa)) are Extracellular-facing. A glycan (N-linked (GlcNAc...) asparagine) is linked at N674. Glycine-binding residues include S688 and D732. C744 and C798 are oxidised to a cystine. The N-linked (GlcNAc...) asparagine glycan is linked to N771. A helical transmembrane segment spans residues 813 to 833 (MAGVFMLVAGGIVAGIFLIFI). Over 834–938 (EIAYKRHKDA…LQLCSRHRES (105 aa)) the chain is Cytoplasmic. At K877 the chain carries Phosphoserine. S889, S890, S896, and S897 each carry phosphoserine; by PKC. The interval 889-938 (SSFKRRRSSKDTSTGGGRGALQNQKDTVLPRRAIEREEGQLQLCSRHRES) is disordered. Residue K898 is modified to Phosphoserine. Residues 916 to 927 (VLPRRAIEREEG) show a composition bias toward basic and acidic residues.

Belongs to the glutamate-gated ion channel (TC 1.A.10.1) family. NR1/GRIN1 subfamily. Heterotetramer; the NMDAR subunits are modular and harbor tiered domains that function in concert to regulate opening and closing of the cation-selective ion channel pore. Forms heterotetrameric channels composed of two GluN1/zeta subunits (GRIN1), and two identical GluN2/epsilon subunits (GRIN2A, GRIN2B, GRIN2C or GRIN2D) or GluN3 subunits (GRIN3A or GRIN3B) (in vitro). Can also form heterotetrameric channels that contain at least two GluN1 subunits and at least two different GluN2 subunits (or a combination of one GluN2 and one GluN3 subunits) (in vitro). In vivo, the subunit composition may vary in function of the expression levels of the different subunits. Found in a complex with GRIN2A or GRIN2B, GRIN3A and PPP2CB. Found in a complex with GRIN2A or GRIN2B and GRIN3B;. Interacts with SNX27 (via PDZ domain); the interaction is required for recycling to the plasma membrane when endocytosed and prevent degradation in lysosomes. Interacts with DLG4 and MPDZ. Interacts with LRFN1 and LRFN2. Interacts with MYZAP. Found in a complex with DLG4 and PRR7. Found in a complex with GRIN2B and PRR7. Interacts with PRR7; the interaction is reduced following NMDA receptor activity. Post-translationally, NMDA is probably regulated by C-terminal phosphorylation of an isoform of NR1 by PKC. Dephosphorylated on Ser-897 probably by protein phosphatase 2A (PPP2CB). Its phosphorylated state is influenced by the formation of the NMDAR-PPP2CB complex and the NMDAR channel activity. In terms of tissue distribution, detected throughout the brain, in brain cortex, cerebellum, thalamus and olfactory bulb.

Its subcellular location is the cell membrane. The protein resides in the postsynaptic cell membrane. The protein localises to the synaptic cell membrane. It localises to the postsynaptic density membrane. The catalysed reaction is Ca(2+)(in) = Ca(2+)(out). It carries out the reaction Na(+)(in) = Na(+)(out). It catalyses the reaction K(+)(in) = K(+)(out). NMDA glutamate receptor activity is potentiated by Zn2(+) in a dose-dependent fashion. The potentiating effect of Zn2(+) is at submicromolar concentrations and its inhibitory action is at high micromolar to millimolar concentrations. Excitatory glycine receptors are inhibited by D-serine at 100uM. Its function is as follows. Component of N-methyl-D-aspartate (NMDA) receptors (NMDARs) that function as heterotetrameric, ligand-gated cation channels with high calcium permeability and voltage-dependent block by Mg(2+). NMDARs participate in synaptic plasticity for learning and memory formation by contributing to the long-term potentiation (LTP). Channel activation requires binding of the neurotransmitter L-glutamate to the GluN2 subunit, glycine or D-serine binding to the GluN1 subunit, plus membrane depolarization to eliminate channel inhibition by Mg(2+). NMDARs mediate simultaneously the potasium efflux and the influx of calcium and sodium. Each GluN2 or GluN3 subunit confers differential attributes to channel properties, including activation, deactivation and desensitization kinetics, pH sensitivity, Ca2(+) permeability, and binding to allosteric modulators. Forms excitatory glycinergic receptor complexes with GluN3 alone which are activated by glycine binding to the GluN1 and GluN3 subunits. The chain is Glutamate receptor ionotropic, NMDA 1 from Rattus norvegicus (Rat).